A 158-amino-acid polypeptide reads, in one-letter code: SsrA-binding protein (158 aa).

The disordered stretch occupies residues 132-158 (KKTHDKRETEKKRDWNREKARLMRDKG). The segment covering 136-158 (DKRETEKKRDWNREKARLMRDKG) has biased composition (basic and acidic residues).

The protein belongs to the SmpB family.

It is found in the cytoplasm. Required for rescue of stalled ribosomes mediated by trans-translation. Binds to transfer-messenger RNA (tmRNA), required for stable association of tmRNA with ribosomes. tmRNA and SmpB together mimic tRNA shape, replacing the anticodon stem-loop with SmpB. tmRNA is encoded by the ssrA gene; the 2 termini fold to resemble tRNA(Ala) and it encodes a 'tag peptide', a short internal open reading frame. During trans-translation Ala-aminoacylated tmRNA acts like a tRNA, entering the A-site of stalled ribosomes, displacing the stalled mRNA. The ribosome then switches to translate the ORF on the tmRNA; the nascent peptide is terminated with the 'tag peptide' encoded by the tmRNA and targeted for degradation. The ribosome is freed to recommence translation, which seems to be the essential function of trans-translation. This is SsrA-binding protein from Brucella anthropi (strain ATCC 49188 / DSM 6882 / CCUG 24695 / JCM 21032 / LMG 3331 / NBRC 15819 / NCTC 12168 / Alc 37) (Ochrobactrum anthropi).